A 452-amino-acid polypeptide reads, in one-letter code: tRNA modification GTPase MnmE (452 aa).

The (6S)-5-formyl-5,6,7,8-tetrahydrofolate site is built by Arg25, Glu81, and Lys120. One can recognise a TrmE-type G domain in the interval 216-375; sequence GITVVIAGEP…LKNHLKNTAG (160 aa). A K(+)-binding site is contributed by Asn226. Residues 226–231, 245–251, and 270–273 each bind GTP; these read NVGKSS, TDIAGTT, and DTAG. Ser230 is a binding site for Mg(2+). K(+) contacts are provided by Thr245, Ile247, and Thr250. Position 251 (Thr251) interacts with Mg(2+). Position 452 (Lys452) interacts with (6S)-5-formyl-5,6,7,8-tetrahydrofolate.

This sequence belongs to the TRAFAC class TrmE-Era-EngA-EngB-Septin-like GTPase superfamily. TrmE GTPase family. Homodimer. Heterotetramer of two MnmE and two MnmG subunits. K(+) serves as cofactor.

It is found in the cytoplasm. Functionally, exhibits a very high intrinsic GTPase hydrolysis rate. Involved in the addition of a carboxymethylaminomethyl (cmnm) group at the wobble position (U34) of certain tRNAs, forming tRNA-cmnm(5)s(2)U34. This is tRNA modification GTPase MnmE from Coxiella burnetii (strain Dugway 5J108-111).